The sequence spans 191 residues: Large ribosomal subunit protein uL22 (191 aa).

Residues 159–168 show a composition bias toward basic and acidic residues; that stretch reads VPKGEDDTAQ. Residues 159 to 191 form a disordered region; that stretch reads VPKGEDDTAQKKKVSQKKLKKQKLKAALSGGAD. Over residues 169–182 the composition is skewed to basic residues; that stretch reads KKKVSQKKLKKQKL.

It belongs to the universal ribosomal protein uL22 family.

This is Large ribosomal subunit protein uL22 (RPL17) from Suberites domuncula (Sponge).